Here is an 855-residue protein sequence, read N- to C-terminus: Dynein axonemal assembly factor 5 (855 aa).

Ala-2 carries the post-translational modification N-acetylalanine. HEAT repeat units lie at residues 71–109, 202–240, 241–278, 280–318, 354–376, 377–414, 599–638, 696–734, 738–776, and 784–822; these read GPWA…RAAR, HMQS…FGNG, KSVD…CLRD, YSFF…QWQK, FRNL…VGTR, VKSA…DEEA, GEAL…RATD, RDVQ…TSGG, PEKL…CVKG, and QSSV…LFPD.

The protein belongs to the DNAAF5 family. In terms of assembly, interacts with DNAI2; probably involved in outer arm dynein assembly. In terms of tissue distribution, expressed in nasal epithelium and lung epithelium by ciliated cells (at protein level).

It is found in the cytoplasm. Its subcellular location is the dynein axonemal particle. In terms of biological role, cytoplasmic protein involved in the delivery of the dynein machinery to the motile cilium. It is required for the assembly of the axonemal dynein inner and outer arms, two structures attached to the peripheral outer doublet A microtubule of the axoneme, that play a crucial role in cilium motility. The polypeptide is Dynein axonemal assembly factor 5 (Homo sapiens (Human)).